The sequence spans 741 residues: NAD(P)H-quinone oxidoreductase subunit 5, chloroplastic (741 aa).

16 helical membrane passes run 9–29 (WIIP…LLLF), 40–60 (WAFQ…NLSI), 89–109 (IDPL…MVLI), 125–145 (FAYM…SNLI), 147–167 (IYIF…FWFT), 185–205 (GDFG…SFEF), 219–239 (NEVN…GAIA), 258–278 (TPIS…FLVA), 283–303 (LFIV…ITVF), 327–347 (LGYM…FHLI), 354–374 (ALLF…VGYC), 396–416 (NSFL…CFWS), 425–445 (WLYS…TAFY), 549–569 (LFPI…GIPF), 605–625 (VFSV…YKPV), and 718–738 (ISSY…IYYF).

This sequence belongs to the complex I subunit 5 family. As to quaternary structure, NDH is composed of at least 16 different subunits, 5 of which are encoded in the nucleus.

It localises to the plastid. The protein resides in the chloroplast thylakoid membrane. The catalysed reaction is a plastoquinone + NADH + (n+1) H(+)(in) = a plastoquinol + NAD(+) + n H(+)(out). It catalyses the reaction a plastoquinone + NADPH + (n+1) H(+)(in) = a plastoquinol + NADP(+) + n H(+)(out). NDH shuttles electrons from NAD(P)H:plastoquinone, via FMN and iron-sulfur (Fe-S) centers, to quinones in the photosynthetic chain and possibly in a chloroplast respiratory chain. The immediate electron acceptor for the enzyme in this species is believed to be plastoquinone. Couples the redox reaction to proton translocation, and thus conserves the redox energy in a proton gradient. The sequence is that of NAD(P)H-quinone oxidoreductase subunit 5, chloroplastic (ndhF) from Athroisma gracile.